Here is a 779-residue protein sequence, read N- to C-terminus: Abnormal cell migration protein 10 (779 aa).

Residues 78–97 show a composition bias toward acidic residues; that stretch reads NELEADTEEDIAETADDEES. 3 disordered regions span residues 78-105, 189-217, and 242-302; these read NELEADTEEDIAETADDEESKDPVEKTE, SSSRENVKSISTLPPPPPALSYHQTPQQP, and AASS…NAEE. Polar residues predominate over residues 189–200; sequence SSSRENVKSIST. The span at 242–254 shows a compositional bias: low complexity; sequence AASSCSSPDGDSA. Residues 256 to 293 show a composition bias toward polar residues; it reads GDSSSTESSNNRCRNSAFSSNDSCRDSLNTPSPTQVSP. The Ras-associating domain occupies 317–407; it reads EAKVTKIFVK…NKLYFMRRPD (91 aa). The region spanning 456–566 is the PH domain; sequence PPEMEGFLYL…WLVALRIAKN (111 aa). Polar residues-rich tracts occupy residues 645-660 and 688-698; these read SFSVNSCQQSHPSRTS and RASTSSPTIPQ. The disordered stretch occupies residues 645–763; it reads SFSVNSCQQS…SPMAPAKNDL (119 aa). The segment covering 708 to 729 has biased composition (pro residues); it reads PAPPPVASVMRMPPPVTPPKPC.

The protein belongs to the MRL family. May interact (via Ras-associating and PH domains) with ced-10 (GTP-bound form).

The protein localises to the perikaryon. Its function is as follows. Required cell non-autonomously for proper development of the excretory canals and for the long-range anterior-posterior migrations of embryonic neurons CAN, ALM and HSN. Plays a role, probably downstream of ced-10/rac1, in orientating axonal growth of HSN and AVM neurons in response to guidance cues such as slt-1. May regulate growth cone polarization by promoting asymmetric F-actin assembly. May be involved in signal transduction during cell migration. This Caenorhabditis elegans protein is Abnormal cell migration protein 10.